Consider the following 81-residue polypeptide: Short neurotoxin 1 (81 aa).

An N-terminal signal peptide occupies residues 1-21 (MKTLLLTLVVVTIVCLDLGYT). Intrachain disulfides connect C24–C43, C38–C60, C62–C73, and C74–C79.

Belongs to the three-finger toxin family. Short-chain subfamily. Type I alpha-neurotoxin sub-subfamily. In terms of tissue distribution, expressed by the venom gland.

Its subcellular location is the secreted. Functionally, binds to muscle nicotinic acetylcholine receptor (nAChR) and inhibit acetylcholine from binding to the receptor, thereby impairing neuromuscular transmission. This chain is Short neurotoxin 1, found in Austrelaps superbus (Lowland copperhead snake).